A 662-amino-acid chain; its full sequence is DNA topoisomerase 4 subunit B (662 aa).

Residues Tyr20, Asn60, Asp87, 129 to 135 (GLHGVGV), and Lys359 contribute to the ATP site. One can recognise a Toprim domain in the interval 439–553 (TELFIVEGDS…DGHLYLAKPP (115 aa)). The Mg(2+) site is built by Glu445, Asp518, and Asp520.

It belongs to the type II topoisomerase family. ParE type 1 subfamily. As to quaternary structure, heterotetramer composed of ParC and ParE. Mg(2+) is required as a cofactor. The cofactor is Mn(2+). Ca(2+) serves as cofactor.

It carries out the reaction ATP-dependent breakage, passage and rejoining of double-stranded DNA.. Its function is as follows. Topoisomerase IV is essential for chromosome segregation. It relaxes supercoiled DNA. Performs the decatenation events required during the replication of a circular DNA molecule. The polypeptide is DNA topoisomerase 4 subunit B (Rickettsia bellii (strain RML369-C)).